The primary structure comprises 354 residues: NADH-quinone oxidoreductase subunit H (354 aa).

8 helical membrane passes run 22–42 (ILIRAVIIVVPLLLCVAYLIL), 91–111 (YLIAPLMVLMPAVAIWAVIPF), 124–144 (LLYVMAISSVGVYGVILAGWA), 168–188 (MGFALVTVLMVAGSLNLSAIV), 203–223 (ILSWNWLPLLPMFGVYFISGV), 255–275 (LFFLAEYINMIIISTMTALMF), 291–311 (IPGFFWLLIKVFLLLSVFIWI), and 326–346 (LGWKVFIPLTVAWLIIVAIWI).

The protein belongs to the complex I subunit 1 family. As to quaternary structure, NDH-1 is composed of 14 different subunits. Subunits NuoA, H, J, K, L, M, N constitute the membrane sector of the complex.

It is found in the cell inner membrane. It carries out the reaction a quinone + NADH + 5 H(+)(in) = a quinol + NAD(+) + 4 H(+)(out). NDH-1 shuttles electrons from NADH, via FMN and iron-sulfur (Fe-S) centers, to quinones in the respiratory chain. The immediate electron acceptor for the enzyme in this species is believed to be ubiquinone. Couples the redox reaction to proton translocation (for every two electrons transferred, four hydrogen ions are translocated across the cytoplasmic membrane), and thus conserves the redox energy in a proton gradient. This subunit may bind ubiquinone. The polypeptide is NADH-quinone oxidoreductase subunit H (Cupriavidus taiwanensis (strain DSM 17343 / BCRC 17206 / CCUG 44338 / CIP 107171 / LMG 19424 / R1) (Ralstonia taiwanensis (strain LMG 19424))).